The following is a 381-amino-acid chain: E3 ubiquitin-protein ligase RNF13 (381 aa).

Positions 1 to 34 (MLLSIGMLMLSATQVYTILTVQLFAFLNLLPVEA) are cleaved as a signal peptide. The Lumenal segment spans residues 35-182 (DILAYNFENA…VPELSLPLEY (148 aa)). One can recognise a PA domain in the interval 64–160 (LKGFLINSKP…GESSANSLKD (97 aa)). N-linked (GlcNAc...) asparagine glycosylation occurs at Asn-88. The chain crosses the membrane as a helical span at residues 183–203 (YLIPFLIIVGICLILIVIFMI). Residues 204–381 (TKFVQDRHRN…EQDYNIANTV (178 aa)) lie on the Cytoplasmic side of the membrane. The RING-type; atypical zinc finger occupies 240 to 282 (CAICLEEYEDGDKLRILPCSHAYHCKCVDPWLTKTKKTCPVCK). The segment at 285-381 (VVPSQGDSDS…EQDYNIANTV (97 aa)) is disordered. Residues 317-328 (SARTQSFGSLSE) are compositionally biased toward polar residues. The span at 339–357 (SDYEDDDNEETDSSDADNE) shows a compositional bias: acidic residues. The segment covering 365-381 (VQLQPNGEQDYNIANTV) has biased composition (polar residues).

As to quaternary structure, interacts with ERN1. In terms of processing, autoubiquitinated. Post-translationally, N-glycosylated and also modified with chondroitin sulfate. In terms of tissue distribution, expressed in the brain, heart, kidney, liver and spleen. Higher expression in adult tissues compared to the embryonic counterparts.

The protein localises to the endoplasmic reticulum membrane. It localises to the late endosome membrane. Its subcellular location is the lysosome membrane. The protein resides in the nucleus inner membrane. The catalysed reaction is S-ubiquitinyl-[E2 ubiquitin-conjugating enzyme]-L-cysteine + [acceptor protein]-L-lysine = [E2 ubiquitin-conjugating enzyme]-L-cysteine + N(6)-ubiquitinyl-[acceptor protein]-L-lysine.. Its pathway is protein modification; protein ubiquitination. E3 ubiquitin-protein ligase that regulates cell proliferation. Involved in apoptosis regulation. Mediates ER stress-induced activation of JNK signaling pathway and apoptosis by promoting ERN1 activation and splicing of XBP1 mRNA. Also involved in protein trafficking and localization. This Mus musculus (Mouse) protein is E3 ubiquitin-protein ligase RNF13 (Rnf13).